We begin with the raw amino-acid sequence, 412 residues long: Phosphoglycerate kinase (412 aa).

Residues 26–28 (DFN), Arg42, 65–68 (HLGR), Arg133, and Arg166 each bind substrate. ATP-binding positions include Lys217, Gly308, Glu339, and 368–371 (GGDS).

This sequence belongs to the phosphoglycerate kinase family. As to quaternary structure, monomer.

Its subcellular location is the cytoplasm. The enzyme catalyses (2R)-3-phosphoglycerate + ATP = (2R)-3-phospho-glyceroyl phosphate + ADP. The protein operates within carbohydrate degradation; glycolysis; pyruvate from D-glyceraldehyde 3-phosphate: step 2/5. In Synechococcus sp. (strain JA-2-3B'a(2-13)) (Cyanobacteria bacterium Yellowstone B-Prime), this protein is Phosphoglycerate kinase.